A 419-amino-acid polypeptide reads, in one-letter code: L-rhamnose isomerase (419 aa).

3 residues coordinate Mn(2+): H262, D294, and D296.

The protein belongs to the rhamnose isomerase family. As to quaternary structure, homotetramer. Requires Mn(2+) as cofactor.

The protein resides in the cytoplasm. The enzyme catalyses L-rhamnopyranose = L-rhamnulose. It participates in carbohydrate degradation; L-rhamnose degradation; glycerone phosphate from L-rhamnose: step 1/3. Catalyzes the interconversion of L-rhamnose and L-rhamnulose. This is L-rhamnose isomerase from Escherichia coli (strain K12 / MC4100 / BW2952).